We begin with the raw amino-acid sequence, 297 residues long: Ribosomal RNA small subunit methyltransferase H (297 aa).

Residues 37-39, Glu56, Phe87, Asp102, and His109 contribute to the S-adenosyl-L-methionine site; that span reads GGH.

The protein belongs to the methyltransferase superfamily. RsmH family.

It is found in the cytoplasm. The enzyme catalyses cytidine(1402) in 16S rRNA + S-adenosyl-L-methionine = N(4)-methylcytidine(1402) in 16S rRNA + S-adenosyl-L-homocysteine + H(+). Specifically methylates the N4 position of cytidine in position 1402 (C1402) of 16S rRNA. This Borrelia recurrentis (strain A1) protein is Ribosomal RNA small subunit methyltransferase H.